A 139-amino-acid chain; its full sequence is Large-conductance mechanosensitive channel (139 aa).

A run of 2 helical transmembrane segments spans residues 19–39 (VAVIIGAAFGAIVSSMVADVI) and 81–101 (GNFLTLTLNFLIVAFVLFMVV).

The protein belongs to the MscL family. Homopentamer.

It is found in the cell inner membrane. Its function is as follows. Channel that opens in response to stretch forces in the membrane lipid bilayer. May participate in the regulation of osmotic pressure changes within the cell. In Nitrobacter hamburgensis (strain DSM 10229 / NCIMB 13809 / X14), this protein is Large-conductance mechanosensitive channel.